A 268-amino-acid chain; its full sequence is Hydroxypyruvate/pyruvate aldolase (268 aa).

His48 functions as the Proton acceptor in the catalytic mechanism. A divalent metal cation contacts are provided by Glu152 and Asp178.

Belongs to the HpcH/HpaI aldolase family. It depends on Mn(2+) as a cofactor. The cofactor is Mg(2+). Co(2+) is required as a cofactor.

The enzyme catalyses D-glyceraldehyde + 3-hydroxypyruvate = (3R,4S,5R)-3,4,5,6-tetrahydroxy-2-oxohexanoate. The catalysed reaction is D-glyceraldehyde + 3-hydroxypyruvate = 2-dehydro-D-gluconate. It catalyses the reaction D-glyceraldehyde + 3-hydroxypyruvate = 2-dehydro-D-galactonate. It carries out the reaction D-glyceraldehyde + pyruvate = 2-dehydro-3-deoxy-L-galactonate. The enzyme catalyses 2-dehydro-3-deoxy-D-gluconate = D-glyceraldehyde + pyruvate. Aldolase which can catalyze in vitro the aldolisation reaction between hydroxypyruvate (HPA) or pyruvate (PA) and D-glyceraldehyde (D-GA). The condensation of hydroxypyruvate and D-glyceraldehyde produces (3R,4S,5R)-3,4,5,6-tetrahydroxy-2-oxohexanoate as the major product, 2-dehydro-D-gluconate and 2-dehydro-D-galactonate. The condensation of pyruvate and D-glyceraldehyde produces 2-dehydro-3-deoxy-L-galactonate as the major product and 2-dehydro-3-deoxy-D-gluconate. Also catalyzes the retro-aldol type decarboxylation of oxaloacetate, a general property of known pyruvate aldolases. This chain is Hydroxypyruvate/pyruvate aldolase, found in Pseudomonas aeruginosa.